The primary structure comprises 102 residues: Small ribosomal subunit protein uS10 (102 aa).

This sequence belongs to the universal ribosomal protein uS10 family. Part of the 30S ribosomal subunit.

Functionally, involved in the binding of tRNA to the ribosomes. This is Small ribosomal subunit protein uS10 from Bifidobacterium animalis subsp. lactis (strain AD011).